The following is a 671-amino-acid chain: uncharacterized protein (671 aa).

Residues 39–56 form a helical membrane-spanning segment; it reads ATVTVVILLLILLLGWGY.

Its subcellular location is the membrane. This is an uncharacterized protein from Treponema pallidum (strain Nichols).